The sequence spans 114 residues: Cytochrome b-c1 complex subunit 1, mitochondrial (114 aa).

The residue at position 31 (Lys31) is an N6-acetyllysine.

Belongs to the peptidase M16 family. UQCRC1/QCR1 subfamily. As to quaternary structure, component of the ubiquinol-cytochrome c oxidoreductase (cytochrome b-c1 complex, complex III, CIII), a multisubunit enzyme composed of 11 subunits. The complex is composed of 3 respiratory subunits cytochrome b, cytochrome c1 and Rieske protein UQCRFS1, 2 core protein subunits UQCRC1/QCR1 and UQCRC2/QCR2, and 6 low-molecular weight protein subunits UQCRH/QCR6, UQCRB/QCR7, UQCRQ/QCR8, UQCR10/QCR9, UQCR11/QCR10 and subunit 9, the cleavage product of Rieske protein UQCRFS1. The complex exists as an obligatory dimer and forms supercomplexes (SCs) in the inner mitochondrial membrane with NADH-ubiquinone oxidoreductase (complex I, CI) and cytochrome c oxidase (complex IV, CIV), resulting in different assemblies (supercomplex SCI(1)III(2)IV(1) and megacomplex MCI(2)III(2)IV(2)). Interacts with UQCC6. Interacts with STMP1.

It is found in the mitochondrion inner membrane. Functionally, component of the ubiquinol-cytochrome c oxidoreductase, a multisubunit transmembrane complex that is part of the mitochondrial electron transport chain which drives oxidative phosphorylation. The respiratory chain contains 3 multisubunit complexes succinate dehydrogenase (complex II, CII), ubiquinol-cytochrome c oxidoreductase (cytochrome b-c1 complex, complex III, CIII) and cytochrome c oxidase (complex IV, CIV), that cooperate to transfer electrons derived from NADH and succinate to molecular oxygen, creating an electrochemical gradient over the inner membrane that drives transmembrane transport and the ATP synthase. The cytochrome b-c1 complex catalyzes electron transfer from ubiquinol to cytochrome c, linking this redox reaction to translocation of protons across the mitochondrial inner membrane, with protons being carried across the membrane as hydrogens on the quinol. In the process called Q cycle, 2 protons are consumed from the matrix, 4 protons are released into the intermembrane space and 2 electrons are passed to cytochrome c. The 2 core subunits UQCRC1/QCR1 and UQCRC2/QCR2 are homologous to the 2 mitochondrial-processing peptidase (MPP) subunits beta-MPP and alpha-MPP respectively, and they seem to have preserved their MPP processing properties. May be involved in the in situ processing of UQCRFS1 into the mature Rieske protein and its mitochondrial targeting sequence (MTS)/subunit 9 when incorporated into complex III. Seems to play an important role in the maintenance of proper mitochondrial function in nigral dopaminergic neurons. In Mesocricetus auratus (Golden hamster), this protein is Cytochrome b-c1 complex subunit 1, mitochondrial.